The sequence spans 890 residues: Probable LRR receptor-like serine/threonine-protein kinase At1g51860 (890 aa).

An N-terminal signal peptide occupies residues 1-23 (MKSLHWFLHLLIIAFTVLRSVEA). Residues 24–513 (QNQAGFISLD…KESKKVPMVA (490 aa)) are Extracellular-facing. Residues Asn49, Asn96, Asn142, Asn181, Asn256, Asn285, Asn289, Asn295, Asn312, Asn332, Asn340, Asn402, and Asn419 are each glycosylated (N-linked (GlcNAc...) asparagine). 3 LRR repeats span residues 412–435 (RIISLNLNGSELTGSITSDISKLT), 436–458 (LLTVLDLSNNDLSGDIPTFFAEM), and 460–481 (SLKLINLSGNPNLNLTAIPDSL). Asn465, Asn473, and Asn497 each carry an N-linked (GlcNAc...) asparagine glycan. A helical membrane pass occupies residues 514–534 (IAASVAGVFALLVILAIFFVI). Over 535 to 890 (KRKNVKAHKS…STSDFAPGAR (356 aa)) the chain is Cytoplasmic. Thr575 carries the post-translational modification Phosphothreonine. Residues 584-856 (NNFERVLGKG…HVVMELNDCV (273 aa)) enclose the Protein kinase domain. ATP is bound by residues 590-598 (LGKGGFGTV) and Lys611. The residue at position 656 (Tyr656) is a Phosphotyrosine. Asp708 acts as the Proton acceptor in catalysis. At Ser742 the chain carries Phosphoserine. 2 positions are modified to phosphothreonine: Thr743 and Thr748. Tyr756 bears the Phosphotyrosine mark.

Belongs to the protein kinase superfamily. Ser/Thr protein kinase family.

Its subcellular location is the membrane. The enzyme catalyses L-seryl-[protein] + ATP = O-phospho-L-seryl-[protein] + ADP + H(+). It carries out the reaction L-threonyl-[protein] + ATP = O-phospho-L-threonyl-[protein] + ADP + H(+). The sequence is that of Probable LRR receptor-like serine/threonine-protein kinase At1g51860 from Arabidopsis thaliana (Mouse-ear cress).